A 428-amino-acid chain; its full sequence is Protein CLP1 homolog (428 aa).

ATP-binding positions include E22, K63, and 127-132 (DVGKST).

The protein belongs to the Clp1 family. Clp1 subfamily.

It localises to the nucleus. Its function is as follows. Required for endonucleolytic cleavage during polyadenylation-dependent pre-mRNA 3'-end formation. The chain is Protein CLP1 homolog from Nematostella vectensis (Starlet sea anemone).